The sequence spans 89 residues: Small ribosomal subunit protein uS15 (89 aa).

Belongs to the universal ribosomal protein uS15 family. In terms of assembly, part of the 30S ribosomal subunit. Forms a bridge to the 50S subunit in the 70S ribosome, contacting the 23S rRNA.

In terms of biological role, one of the primary rRNA binding proteins, it binds directly to 16S rRNA where it helps nucleate assembly of the platform of the 30S subunit by binding and bridging several RNA helices of the 16S rRNA. Its function is as follows. Forms an intersubunit bridge (bridge B4) with the 23S rRNA of the 50S subunit in the ribosome. This chain is Small ribosomal subunit protein uS15, found in Anoxybacillus flavithermus (strain DSM 21510 / WK1).